The chain runs to 98 residues: Cystatin-A (98 aa).

Position 1 is an N-acetylmethionine (M1). The Secondary area of contact signature appears at 46 to 50; that stretch reads QVVAG.

Belongs to the cystatin family.

It is found in the cytoplasm. Its function is as follows. This is an intracellular thiol proteinase inhibitor. This is Cystatin-A (CSTA) from Bos taurus (Bovine).